A 491-amino-acid polypeptide reads, in one-letter code: DEAD-box ATP-dependent RNA helicase 36 (491 aa).

Acidic residues predominate over residues 1–10 (MEEPTPEEEG). Residues 1–56 (MEEPTPEEEGGITIMSKSRKNPKTVVNIQSQKLDSDQNTPQFEKFTNPNPSSDTTS) are disordered. Residues 24–56 (TVVNIQSQKLDSDQNTPQFEKFTNPNPSSDTTS) are compositionally biased toward polar residues. Residues 58 to 86 (TNFEGLGLAEWAVETCKELGMRKPTPVQT) carry the Q motif motif. The region spanning 89-262 (VPKILAGRDV…EHSSNKAYFY (174 aa)) is the Helicase ATP-binding domain. 102-109 (AQTGSGKT) lines the ATP pocket. The DEAD box signature appears at 210–213 (DEAD). Positions 289–438 (YLVHILSQME…NKKVITDSLE (150 aa)) constitute a Helicase C-terminal domain. Residues 471–491 (KTLADKGLLKKRGKRQKSTEN) are disordered. The segment covering 479–491 (LKKRGKRQKSTEN) has biased composition (basic residues).

It belongs to the DEAD box helicase family. DDX49/DBP8 subfamily.

It carries out the reaction ATP + H2O = ADP + phosphate + H(+). The sequence is that of DEAD-box ATP-dependent RNA helicase 36 (RH36) from Arabidopsis thaliana (Mouse-ear cress).